The primary structure comprises 105 residues: uncharacterized protein (105 aa).

Ser2 carries the post-translational modification N-acetylserine.

This is an uncharacterized protein from Saccharomyces cerevisiae (strain ATCC 204508 / S288c) (Baker's yeast).